The following is a 141-amino-acid chain: Nucleoside triphosphatase NudI (141 aa).

Positions M1 to L141 constitute a Nudix hydrolase domain. The short motif at G38–G59 is the Nudix box element.

Belongs to the Nudix hydrolase family. NudI subfamily. Monomer. Requires Mg(2+) as cofactor.

The enzyme catalyses a ribonucleoside 5'-triphosphate + H2O = a ribonucleoside 5'-phosphate + diphosphate + H(+). It carries out the reaction a 2'-deoxyribonucleoside 5'-triphosphate + H2O = a 2'-deoxyribonucleoside 5'-phosphate + diphosphate + H(+). The catalysed reaction is dUTP + H2O = dUMP + diphosphate + H(+). It catalyses the reaction dTTP + H2O = dTMP + diphosphate + H(+). The enzyme catalyses dCTP + H2O = dCMP + diphosphate + H(+). Its function is as follows. Catalyzes the hydrolysis of nucleoside triphosphates, with a preference for pyrimidine deoxynucleoside triphosphates (dUTP, dTTP and dCTP). The sequence is that of Nucleoside triphosphatase NudI from Salmonella heidelberg (strain SL476).